The sequence spans 345 residues: MSKQSLSYKDAGVDINAGNTLVERIKSDVKRTTRPEVIGGLGGFGALCALPSKYKDPILVSGTDGVGTKLRLAIDLKKHDTIGVDLVAMCVNDLVVQGAEPLFFLDYYATGKLDVDVAADVIKGIADGCVQAGCALVGGETAEMPGMYHTGDYDLAGFCVGVVEKSEIIDGSNVKAGDALLALASSGPHSNGYSLIRKVIEVSGIDPTTTQLAEHSFAEQVLAPTKIYVKPVLQLIKHTDVHAICHLTGGGFWENIPRVLPSSVKAVINEKSWEWHPIFKWLQEQGNIDRYEMYRTFNCGVGMIIALPQEDVETALALLQQVGEKAWVIGKIEHANADEEKVVIC.

The protein belongs to the AIR synthase family.

Its subcellular location is the cytoplasm. The enzyme catalyses 2-formamido-N(1)-(5-O-phospho-beta-D-ribosyl)acetamidine + ATP = 5-amino-1-(5-phospho-beta-D-ribosyl)imidazole + ADP + phosphate + H(+). It functions in the pathway purine metabolism; IMP biosynthesis via de novo pathway; 5-amino-1-(5-phospho-D-ribosyl)imidazole from N(2)-formyl-N(1)-(5-phospho-D-ribosyl)glycinamide: step 2/2. This Histophilus somni (strain 129Pt) (Haemophilus somnus) protein is Phosphoribosylformylglycinamidine cyclo-ligase.